The primary structure comprises 346 residues: Phosphoribosylformylglycinamidine cyclo-ligase (346 aa).

It belongs to the AIR synthase family.

Its subcellular location is the cytoplasm. It carries out the reaction 2-formamido-N(1)-(5-O-phospho-beta-D-ribosyl)acetamidine + ATP = 5-amino-1-(5-phospho-beta-D-ribosyl)imidazole + ADP + phosphate + H(+). The protein operates within purine metabolism; IMP biosynthesis via de novo pathway; 5-amino-1-(5-phospho-D-ribosyl)imidazole from N(2)-formyl-N(1)-(5-phospho-D-ribosyl)glycinamide: step 2/2. The polypeptide is Phosphoribosylformylglycinamidine cyclo-ligase (Shewanella piezotolerans (strain WP3 / JCM 13877)).